We begin with the raw amino-acid sequence, 979 residues long: Glycine dehydrogenase (decarboxylating) (979 aa).

The residue at position 726 (Lys-726) is an N6-(pyridoxal phosphate)lysine.

It belongs to the GcvP family. As to quaternary structure, the glycine cleavage system is composed of four proteins: P, T, L and H. Pyridoxal 5'-phosphate serves as cofactor.

It catalyses the reaction N(6)-[(R)-lipoyl]-L-lysyl-[glycine-cleavage complex H protein] + glycine + H(+) = N(6)-[(R)-S(8)-aminomethyldihydrolipoyl]-L-lysyl-[glycine-cleavage complex H protein] + CO2. The glycine cleavage system catalyzes the degradation of glycine. The P protein binds the alpha-amino group of glycine through its pyridoxal phosphate cofactor; CO(2) is released and the remaining methylamine moiety is then transferred to the lipoamide cofactor of the H protein. The polypeptide is Glycine dehydrogenase (decarboxylating) (Ralstonia pickettii (strain 12J)).